A 137-amino-acid chain; its full sequence is Nucleoside diphosphate kinase (137 aa).

ATP-binding residues include Lys9, Phe57, Arg85, Thr91, Arg102, and Asn112. His115 (pros-phosphohistidine intermediate) is an active-site residue.

Belongs to the NDK family. In terms of assembly, homotetramer. Mg(2+) serves as cofactor.

Its subcellular location is the cytoplasm. The catalysed reaction is a 2'-deoxyribonucleoside 5'-diphosphate + ATP = a 2'-deoxyribonucleoside 5'-triphosphate + ADP. The enzyme catalyses a ribonucleoside 5'-diphosphate + ATP = a ribonucleoside 5'-triphosphate + ADP. Its function is as follows. Major role in the synthesis of nucleoside triphosphates other than ATP. The ATP gamma phosphate is transferred to the NDP beta phosphate via a ping-pong mechanism, using a phosphorylated active-site intermediate. The protein is Nucleoside diphosphate kinase of Thermus thermophilus (strain ATCC BAA-163 / DSM 7039 / HB27).